The chain runs to 737 residues: Exostosin-1c (737 aa).

Residues 1-6 (MQARKK) lie on the Cytoplasmic side of the membrane. A helical; Signal-anchor for type II membrane protein membrane pass occupies residues 7-27 (YVLLGLCTCCWILLYYWAGLQ). Residues 28-737 (ERLLGLITHR…RKRYKDLERV (710 aa)) are Lumenal-facing. Asn-194 and Asn-322 each carry an N-linked (GlcNAc...) asparagine glycan. The UDP-N-acetyl-alpha-D-glucosamine site is built by Arg-432, Arg-540, Asp-556, Glu-557, Asp-558, Glu-644, Asp-645, and Arg-692. Asp-558 contributes to the Mn(2+) binding site. An intrachain disulfide couples Cys-643 to Cys-695. The active site involves Asp-645.

Belongs to the glycosyltransferase 47 family. Requires Mn(2+) as cofactor.

It is found in the endoplasmic reticulum membrane. The enzyme catalyses 3-O-{[(1-&gt;4)-beta-D-GlcA-(1-&gt;4)-alpha-D-GlcNAc](n)-(1-&gt;4)-beta-D-GlcA-(1-&gt;3)-beta-D-Gal-(1-&gt;3)-beta-D-Gal-(1-&gt;4)-beta-D-Xyl}-L-seryl-[protein] + UDP-N-acetyl-alpha-D-glucosamine = 3-O-{alpha-D-GlcNAc-[(1-&gt;4)-beta-D-GlcA-(1-&gt;4)-alpha-D-GlcNAc](n)-(1-&gt;4)-beta-D-GlcA-(1-&gt;3)-beta-D-Gal-(1-&gt;3)-beta-D-Gal-(1-&gt;4)-beta-D-Xyl}-L-seryl-[protein] + UDP + H(+). It catalyses the reaction 3-O-{alpha-D-GlcNAc-[(1-&gt;4)-beta-D-GlcA-(1-&gt;4)-alpha-D-GlcNAc](n)-(1-&gt;4)-beta-D-GlcA-(1-&gt;3)-beta-D-Gal-(1-&gt;3)-beta-D-Gal-(1-&gt;4)-beta-D-Xyl}-L-seryl-[protein] + UDP-alpha-D-glucuronate = 3-O-{[(1-&gt;4)-beta-D-GlcA-(1-&gt;4)-alpha-D-GlcNAc](n+1)-(1-&gt;4)-beta-D-GlcA-(1-&gt;3)-beta-D-Gal-(1-&gt;3)-beta-D-Gal-(1-&gt;4)-beta-D-Xyl}-L-seryl-[protein] + UDP + H(+). Its pathway is protein modification; protein glycosylation. Its function is as follows. Glycosyltransferase required for the biosynthesis of heparan-sulfate. This Danio rerio (Zebrafish) protein is Exostosin-1c (ext1c).